Consider the following 209-residue polypeptide: Large ribosomal subunit protein uL4 (209 aa).

The interval 46–72 (GTSSTKTRSEVRGSSKKPWKQKGTGRA) is disordered. Residues 59–72 (SSKKPWKQKGTGRA) show a composition bias toward basic residues.

It belongs to the universal ribosomal protein uL4 family. In terms of assembly, part of the 50S ribosomal subunit.

Its function is as follows. One of the primary rRNA binding proteins, this protein initially binds near the 5'-end of the 23S rRNA. It is important during the early stages of 50S assembly. It makes multiple contacts with different domains of the 23S rRNA in the assembled 50S subunit and ribosome. Functionally, forms part of the polypeptide exit tunnel. This Borreliella burgdorferi (strain ATCC 35210 / DSM 4680 / CIP 102532 / B31) (Borrelia burgdorferi) protein is Large ribosomal subunit protein uL4.